The sequence spans 296 residues: 110 kDa antigen (296 aa).

A 1; approximate repeat occupies 132–143; sequence EETQKTVEPEQI. Residues 132 to 296 are 13.5 X 12 AA approximate tandem repeats of E-E-T-Q-K-T-V-E-P-E-Q-T; that stretch reads EETQKTVEPE…TQETQNTVEP (165 aa). Residues 133–296 form a disordered region; that stretch reads ETQKTVEPEQ…TQETQNTVEP (164 aa). The stretch at 144–155 is one 2; approximate repeat; it reads EETQNTVEPEQT. Repeat 3 spans residues 156 to 167; the sequence is EETQKTVEPEQT. Residues 168-179 form a 4; approximate repeat; it reads EETQNTVEPEQI. Copy 5 of the repeat occupies 180 to 191; sequence EETQKTVEPEQT. The segment covering 181 to 271 has biased composition (basic and acidic residues); that stretch reads ETQKTVEPEQ…QTEETQKTVE (91 aa). The 6; approximate repeat unit spans residues 192 to 203; that stretch reads EEAQKTVEPEQT. 6 repeat units span residues 204–215, 216–227, 228–239, 240–251, 252–263, and 264–275. The stretch at 276–287 is one 13; approximate repeat; it reads EETQNTVEPEPT. The span at 277–296 shows a compositional bias: polar residues; sequence ETQNTVEPEPTQETQNTVEP. A 14; truncated repeat occupies 288 to 293; sequence QETQNT.

The protein is 110 kDa antigen of Plasmodium knowlesi.